The following is a 724-amino-acid chain: MVMQEEKKRQQPVTRRVRSFSESFKNLFRPPRSRDSSPINVTRIPYRSSSTSPKRSSEPPRRSTVSAQILDPKNSPIRQRSYTLKCCTPGLSHPFRQTGSGASNSPTRHRSISGEEQEIVNSLPEYKRSASHTFHGIRRPRSRSSSVSSCDSSNGTTSSSDSQWAMDSLLDDSDNDLTPYRGSNKDILKSKDRAPYNYIDDYNKKALRRATSYPNPLPSKQFYNERLYTRRSHPDEESLESLPRSAGADVQCIIEQNGFKVYEDGSHEHNIKLSGVIAKLEKGNSLPVHRQGLLSRPRLGITLSGLFKHHKNECDIENASSLLPNVEKSQTNHEKRTGQSPNDSNRSSPTQGREDYLKIVNPDASLGSDELKLINSLSSRIHKSLQNYLQEKNLKPAECIGEQAPTFQDNYGHPVGLVGAGAYGEVKLCARLRNEKDSPPFETYHDSKYIYYAVKELKPKPDSDLEKFCTKITSEFIIGHSLSHYHKNGKKPAPNILNVFDILEDSSSFIEVMEFCPAGDLYGMLVGKSKLKGRLHPLEADCFMKQLLHGVKFMHDHGIAHCDLKPENILFYPHGLLKICDFGTSSVFQTAWERRVHAQKGIIGSEPYVAPEEFVDGEYYDPRLIDCWSCGVVYITMILGHHLWKVASREKDMSYDEFYKEMQRKNQFRVFEELKHVNSELATNRKIALYRIFQWEPRKRISVGKLLDMQWMKSTNCCLIYDST.

2 disordered regions span residues 1 to 81 (MVMQ…RQRS) and 93 to 188 (HPFR…KDIL). S19 carries the post-translational modification Phosphoserine. Over residues 45–54 (PYRSSSTSPK) the composition is skewed to low complexity. Over residues 95–106 (FRQTGSGASNSP) the composition is skewed to polar residues. Over residues 143–162 (RSSSVSSCDSSNGTTSSSDS) the composition is skewed to low complexity. S232, S238, and S241 each carry phosphoserine. Composition is skewed to polar residues over residues 318–329 (NASSLLPNVEKS) and 338–351 (GQSP…SPTQ). Residues 318–355 (NASSLLPNVEKSQTNHEKRTGQSPNDSNRSSPTQGRED) form a disordered region. The Protein kinase domain maps to 412 to 712 (GHPVGLVGAG…VGKLLDMQWM (301 aa)). ATP contacts are provided by residues 418–426 (VGAGAYGEV) and K455. The Proton acceptor role is filled by D563.

Belongs to the protein kinase superfamily. CAMK Ser/Thr protein kinase family. NPR/HAL subfamily. HAL5 sub-subfamily.

It localises to the cytoplasm. The enzyme catalyses L-seryl-[protein] + ATP = O-phospho-L-seryl-[protein] + ADP + H(+). It carries out the reaction L-threonyl-[protein] + ATP = O-phospho-L-threonyl-[protein] + ADP + H(+). This is Probable serine/threonine-protein kinase KKQ8 (KKQ8) from Saccharomyces cerevisiae (strain YJM789) (Baker's yeast).